A 102-amino-acid polypeptide reads, in one-letter code: NADH-quinone oxidoreductase subunit K (102 aa).

3 helical membrane-spanning segments follow: residues 5 to 25 (ITHY…GIFL), 31 to 51 (IIIL…FVAF), and 66 to 86 (FVLT…VVFF).

The protein belongs to the complex I subunit 4L family. NDH-1 is composed of 14 different subunits. Subunits NuoA, H, J, K, L, M, N constitute the membrane sector of the complex.

It localises to the cell inner membrane. It carries out the reaction a quinone + NADH + 5 H(+)(in) = a quinol + NAD(+) + 4 H(+)(out). Its function is as follows. NDH-1 shuttles electrons from NADH, via FMN and iron-sulfur (Fe-S) centers, to quinones in the respiratory chain. The immediate electron acceptor for the enzyme in this species is believed to be ubiquinone. Couples the redox reaction to proton translocation (for every two electrons transferred, four hydrogen ions are translocated across the cytoplasmic membrane), and thus conserves the redox energy in a proton gradient. This Bartonella grahamii (strain as4aup) protein is NADH-quinone oxidoreductase subunit K.